We begin with the raw amino-acid sequence, 85 residues long: Sec-independent protein translocase protein TatA (85 aa).

Residues 1 to 21 (MGGISIWQLLIIALIVVLLFG) form a helical membrane-spanning segment. The disordered stretch occupies residues 43 to 85 (MSSDEDKKALEDAEAAKSVQTAQTAQPTQQATEKKPESNKEQA). The segment covering 46–57 (DEDKKALEDAEA) has biased composition (basic and acidic residues). The segment covering 58 to 73 (AKSVQTAQTAQPTQQA) has biased composition (low complexity). Over residues 74-85 (TEKKPESNKEQA) the composition is skewed to basic and acidic residues.

The protein belongs to the TatA/E family. The Tat system comprises two distinct complexes: a TatABC complex, containing multiple copies of TatA, TatB and TatC subunits, and a separate TatA complex, containing only TatA subunits. Substrates initially bind to the TatABC complex, which probably triggers association of the separate TatA complex to form the active translocon.

The protein localises to the cell inner membrane. Part of the twin-arginine translocation (Tat) system that transports large folded proteins containing a characteristic twin-arginine motif in their signal peptide across membranes. TatA could form the protein-conducting channel of the Tat system. The polypeptide is Sec-independent protein translocase protein TatA (Shewanella sp. (strain ANA-3)).